The primary structure comprises 188 residues: Holliday junction branch migration complex subunit RuvA (188 aa).

Positions 1-64 (MIAGISGRVL…QDGITLYGFS (64 aa)) are domain I. A domain II region spans residues 65–143 (NEMKKELFLS…SAGIKDMRIY (79 aa)). A region of interest (flexible linker) is located at residue Tyr-143. Residues 143–186 (YHESLEALVSLGYPEKQAREAVKQVYREGMKTSELIKEALKFLS) are domain III.

Belongs to the RuvA family. In terms of assembly, homotetramer. Forms an RuvA(8)-RuvB(12)-Holliday junction (HJ) complex. HJ DNA is sandwiched between 2 RuvA tetramers; dsDNA enters through RuvA and exits via RuvB. An RuvB hexamer assembles on each DNA strand where it exits the tetramer. Each RuvB hexamer is contacted by two RuvA subunits (via domain III) on 2 adjacent RuvB subunits; this complex drives branch migration. In the full resolvosome a probable DNA-RuvA(4)-RuvB(12)-RuvC(2) complex forms which resolves the HJ.

It localises to the cytoplasm. Functionally, the RuvA-RuvB-RuvC complex processes Holliday junction (HJ) DNA during genetic recombination and DNA repair, while the RuvA-RuvB complex plays an important role in the rescue of blocked DNA replication forks via replication fork reversal (RFR). RuvA specifically binds to HJ cruciform DNA, conferring on it an open structure. The RuvB hexamer acts as an ATP-dependent pump, pulling dsDNA into and through the RuvAB complex. HJ branch migration allows RuvC to scan DNA until it finds its consensus sequence, where it cleaves and resolves the cruciform DNA. Promotes Holliday junction (HJ) branch migration in conjunction with RuvB. The sequence is that of Holliday junction branch migration complex subunit RuvA from Thermotoga maritima (strain ATCC 43589 / DSM 3109 / JCM 10099 / NBRC 100826 / MSB8).